The chain runs to 571 residues: Proline--tRNA ligase (571 aa).

Belongs to the class-II aminoacyl-tRNA synthetase family. ProS type 1 subfamily. Homodimer.

Its subcellular location is the cytoplasm. The enzyme catalyses tRNA(Pro) + L-proline + ATP = L-prolyl-tRNA(Pro) + AMP + diphosphate. Catalyzes the attachment of proline to tRNA(Pro) in a two-step reaction: proline is first activated by ATP to form Pro-AMP and then transferred to the acceptor end of tRNA(Pro). As ProRS can inadvertently accommodate and process non-cognate amino acids such as alanine and cysteine, to avoid such errors it has two additional distinct editing activities against alanine. One activity is designated as 'pretransfer' editing and involves the tRNA(Pro)-independent hydrolysis of activated Ala-AMP. The other activity is designated 'posttransfer' editing and involves deacylation of mischarged Ala-tRNA(Pro). The misacylated Cys-tRNA(Pro) is not edited by ProRS. This is Proline--tRNA ligase from Shewanella putrefaciens (strain CN-32 / ATCC BAA-453).